The primary structure comprises 622 residues: Transcription factor SKN7 (622 aa).

Residues 1–12 (MSFSTINSNVNK) are compositionally biased toward polar residues. Residues 1-29 (MSFSTINSNVNKTTGDSNNNTTENSSTAD) form a disordered region. Residues 13 to 27 (TTGDSNNNTTENSST) show a composition bias toward low complexity. The segment at 84–190 (ANEFVRKLFR…GLDNIKRKIP (107 aa)) is DNA-binding domain. The tract at residues 212–303 (TNPNNPSGSL…NNFNTLCSTL (92 aa)) is hydrophobic repeat HR-A/B. Positions 240 to 260 (FGNLRRRVDKLQKELDMSKME) form a coiled coil. The Response regulatory domain maps to 378 to 492 (HVLLVEDDAV…DLHSILIRYL (115 aa)). Position 427 is a 4-aspartylphosphate (Asp-427). Disordered stretches follow at residues 501 to 579 (QQLP…QHHN) and 599 to 622 (TVPH…NQLS). A compositionally biased stretch (low complexity) spans 512 to 527 (THSNTNTANSNPNTIN). Polar residues predominate over residues 537-554 (DNPSTTTPVTPGASISSA). The segment covering 555–578 (QHVQQGQQEQQHQIFHAQQQQQHH) has biased composition (low complexity). Over residues 600–622 (VPHSSMGSTPQLPQSTLQENQLS) the composition is skewed to polar residues.

The protein belongs to the SKN7 family. In terms of assembly, homotrimer. In terms of processing, the phosphorelay mechanism involves the sequential transfer of a phosphate group from 'His-576' (H1) to 'Asp-1144' (D1) of SLN1, then to 'His-64' (H2) of YPD1 and finally to Asp-427 (D2) of SKN7.

The protein resides in the nucleus. Transcription factor that is part of a SLN1-YPD1-SKN7 two-component regulatory system, which controls gene expression in response to changes in the osmolarity of the extracellular environment. Under low osmotic conditions, phosphorylated and activated by the phosphorelay intermediate protein YPD1. Also activated in response to oxidative stress, independent on the two-component regulatory system. Regulates heat shock genes in response to oxidative stress and genes involved in cell wall integrity in response to osmotic changes. This chain is Transcription factor SKN7 (SKN7), found in Saccharomyces cerevisiae (strain ATCC 204508 / S288c) (Baker's yeast).